The following is an 85-amino-acid chain: Alpha-defensin 14 (85 aa).

The first 11 residues, 1–11, serve as a signal peptide directing secretion; that stretch reads ALVLLAFQVQA. The propeptide occupies 12–50; that stretch reads DPIQNTDEETKTEEQPGEDDQAVSVSFGDPEGSSLQEES. Residues 13–48 are disordered; the sequence is PIQNTDEETKTEEQPGEDDQAVSVSFGDPEGSSLQE. 3 cysteine pairs are disulfide-bonded: Cys-56–Cys-84, Cys-58–Cys-73, and Cys-63–Cys-83.

Belongs to the alpha-defensin family. Paneth cells of the small bowel.

It localises to the secreted. In terms of biological role, probably contributes to the antimicrobial barrier function of the small bowel mucosa. This is Alpha-defensin 14 (Defa14) from Mus musculus (Mouse).